Here is a 688-residue protein sequence, read N- to C-terminus: MGQEKLYIEKELSWLAFNERVLQEAADKSNPLIERMRFLGIYSNNLDEFYKVRFAELKRRIIISEEQGSNSHSRHLLGKIQSRVLKADQEFDGLYNELLLEMARNQIFLINERQLSVNQQSWLRHYFKHYLRQHITPILINRETDLVQFLKDDYTYLAVEIIRGDTINYALLEIPSDKVPRFVNLPPETPRRRKPMILLDNILRYCLDDIFKGFFDYDALNAYSMKMTRDAEYDLVHEMESSLMELMSSSLKQRLTAEPVRFVYQRDMPAALVDVLREKLTISRYDSIVPGGRYHNFKDFINFPNVGKANLVNKPLPRLRHLWFDKEKFRNGFDAIRERDVLLYYPYHTFEHVLELLRQASFDPSVLAIKINIYRVAKDSRIIDSMIHAAHNGKKVTVVVELQARFDEEANIHWAKRLTEAGVHVIFSAPGLKIHAKLFLISRKEGDDVVRYAHIGTGNFNEKTARLYTDYSLLTADARITNEVRRVFNFIENPYRPVTFDYLMVSPQNSRRLLYEMIDREIANAQQGLPSGITLKLNNLVDKGLVDRLYAASGSGVQVNLLVRGMCSLIPQLEGISDNIRAISIVDRYLEHDRVYIFENGGDKQVWLSSADWMTRNIDYRIEVATPILDPRLKQRVLDIIDILFSDTVKARFIDKELSNRYVPRGNRRKVQAQLAIYDYIKSLEQPD.

Asn45 contacts ATP. Residues Arg375 and Arg405 each coordinate Mg(2+). The PLD phosphodiesterase domain occupies 430–464 (PGLKIHAKLFLISRKEGDDVVRYAHIGTGNFNEKT). The Phosphohistidine intermediate role is filled by His435. Residues Tyr468, Arg564, and His592 each coordinate ATP.

Belongs to the polyphosphate kinase 1 (PPK1) family. Mg(2+) is required as a cofactor. In terms of processing, an intermediate of this reaction is the autophosphorylated ppk in which a phosphate is covalently linked to a histidine residue through a N-P bond.

The enzyme catalyses [phosphate](n) + ATP = [phosphate](n+1) + ADP. Its function is as follows. Catalyzes the reversible transfer of the terminal phosphate of ATP to form a long-chain polyphosphate (polyP). This is Polyphosphate kinase from Salmonella typhimurium (strain LT2 / SGSC1412 / ATCC 700720).